Consider the following 417-residue polypeptide: MSSKYPRSVRCCLPLCALTLEAALILLFYFFTHYDASLEDQKGLVASYQVGQDLTVMAAIGFGFLTSSFRRHSWSSVAFNLFMLALGVQWAILLDGFLSQFPPGKVVITLFSIRLATMSALSVLISAGAVLGYVNLVQLVVMVLVEVTALGTMRMVISNIFNTDYHMNMTHFYVFAAYFGVTVAWCLPKPLPDIKEDKDQIATIPSLSAMLGTLFLWMFWPSFNSALLRSPIERKNAVFNTYYALAVSVVTAISVSSLAHPQGKINMTYMHNAVLAGGVAVGTSCHLITSPWLAMVLGLVAGLISIGGAKCLPGCCNRVLGIHDSSVMHYNFSLLGLLGEITYIVLMVLHTVGAGNGMVGFQVLVSTGELSLALAIAVTSGLLTGLLLNLKIWKAPHAAKYFDDQVFWKFPHLAVGF.

The next 11 helical transmembrane spans lie at 12–32, 44–64, 77–97, 125–145, 172–192, 203–223, 238–258, 265–285, 287–307, 331–351, and 358–378; these read CLPL…YFFT, LVAS…GFGF, VAFN…LDGF, ISAG…MVLV, FYVF…KPLP, TIPS…WPSF, VFNT…VSSL, INMT…GTSC, LITS…ISIG, NFSL…VLHT, and MVGF…AIAV.

Belongs to the ammonium transporter (TC 2.A.49) family. Rh subfamily.

The protein localises to the membrane. Functionally, may be part of an oligomeric complex which is likely to have a transport or channel function in the erythrocyte membrane. This Gorilla gorilla gorilla (Western lowland gorilla) protein is RH-like protein IC.